Consider the following 538-residue polypeptide: Putative outer membrane porin BglH (538 aa).

Positions 1–25 (MFRRNIITSAILLMAPLAFSAQSLA) are cleaved as a signal peptide.

The protein belongs to the porin LamB (TC 1.B.3) family.

It is found in the cell outer membrane. May be a sugar porin with a broad carbohydrate specificity. This chain is Putative outer membrane porin BglH (bglH), found in Escherichia coli O6:H1 (strain CFT073 / ATCC 700928 / UPEC).